A 366-amino-acid chain; its full sequence is Cytochrome c mitochondrial import factor CYC2 (366 aa).

A mitochondrion-targeting transit peptide spans 1–50; sequence MLWKNYVLSSSRITRRLHKSPRKSSFSKNFFITGCLLTVGAVSSYLTYRY. An FAD-binding FR-type domain is found at 63-184; it reads SYFVKYKISH…RGPFIDYEFP (122 aa).

The cofactor is FAD.

The protein localises to the mitochondrion inner membrane. Functionally, redox component that participates in c-type cytochrome biogenesis in the mitochondrial intermembrane space. May play a role in the reduction of heme prior to its ligation to apocytochrome c by cytochrome c heme lyase. Has oxidoreductase activity in vitro. This is Cytochrome c mitochondrial import factor CYC2 (CYC2) from Saccharomyces cerevisiae (strain ATCC 204508 / S288c) (Baker's yeast).